The following is a 424-amino-acid chain: Histidine--tRNA ligase (424 aa).

Belongs to the class-II aminoacyl-tRNA synthetase family. As to quaternary structure, homodimer.

The protein localises to the cytoplasm. It catalyses the reaction tRNA(His) + L-histidine + ATP = L-histidyl-tRNA(His) + AMP + diphosphate + H(+). The protein is Histidine--tRNA ligase of Edwardsiella ictaluri (strain 93-146).